The following is a 574-amino-acid chain: Glycine--tRNA ligase (574 aa).

Positions 96 and 162 each coordinate substrate. ATP is bound by residues 194-196 (RNE), 204-209 (IRLREF), 327-328 (EC), and 450-453 (GIDR). Residue 209–213 (FTQAE) participates in substrate binding. 446–450 (EPSYG) is a binding site for substrate.

The protein belongs to the class-II aminoacyl-tRNA synthetase family.

Its subcellular location is the cytoplasm. It carries out the reaction tRNA(Gly) + glycine + ATP = glycyl-tRNA(Gly) + AMP + diphosphate. Functionally, catalyzes the attachment of glycine to tRNA(Gly). The protein is Glycine--tRNA ligase of Methanococcus maripaludis (strain DSM 14266 / JCM 13030 / NBRC 101832 / S2 / LL).